A 258-amino-acid polypeptide reads, in one-letter code: Acyl-[acyl-carrier-protein]--UDP-N-acetylglucosamine O-acyltransferase (258 aa).

The protein belongs to the transferase hexapeptide repeat family. LpxA subfamily. Homotrimer.

The protein resides in the cytoplasm. The enzyme catalyses a (3R)-hydroxyacyl-[ACP] + UDP-N-acetyl-alpha-D-glucosamine = a UDP-3-O-[(3R)-3-hydroxyacyl]-N-acetyl-alpha-D-glucosamine + holo-[ACP]. The protein operates within glycolipid biosynthesis; lipid IV(A) biosynthesis; lipid IV(A) from (3R)-3-hydroxytetradecanoyl-[acyl-carrier-protein] and UDP-N-acetyl-alpha-D-glucosamine: step 1/6. Functionally, involved in the biosynthesis of lipid A, a phosphorylated glycolipid that anchors the lipopolysaccharide to the outer membrane of the cell. This Pseudomonas fluorescens (strain Pf0-1) protein is Acyl-[acyl-carrier-protein]--UDP-N-acetylglucosamine O-acyltransferase.